Reading from the N-terminus, the 219-residue chain is Ribose-5-phosphate isomerase A (219 aa).

Residues 28–31 (TGST), 81–84 (DGAD), and 94–97 (KGGG) each bind substrate. The active-site Proton acceptor is the Glu103. Lys121 contacts substrate.

The protein belongs to the ribose 5-phosphate isomerase family. In terms of assembly, homodimer.

The catalysed reaction is aldehydo-D-ribose 5-phosphate = D-ribulose 5-phosphate. It functions in the pathway carbohydrate degradation; pentose phosphate pathway; D-ribose 5-phosphate from D-ribulose 5-phosphate (non-oxidative stage): step 1/1. Functionally, catalyzes the reversible conversion of ribose-5-phosphate to ribulose 5-phosphate. The polypeptide is Ribose-5-phosphate isomerase A (Shewanella oneidensis (strain ATCC 700550 / JCM 31522 / CIP 106686 / LMG 19005 / NCIMB 14063 / MR-1)).